The following is a 766-amino-acid chain: Leucine-rich repeat and fibronectin type III domain-containing protein 1 (766 aa).

Positions 1–31 (MAPGPFSSGLFSPPPAALPFLLLLWAGASRG) are cleaved as a signal peptide. The region spanning 32–65 (QPCPGRCICQNVAPTLTMLCAKTGLLFVPPAIDR) is the LRRNT domain. Residues 32 to 536 (QPCPGRCICQ…LRAHFLGGTM (505 aa)) lie on the Extracellular side of the membrane. 7 LRR repeats span residues 66–87 (RVVE…DFAN), 90–111 (SLVH…AFAD), 114–135 (ALRA…QLRG), 138–159 (NLRH…AFDA), 163–184 (TVED…AVGQ), 187–208 (NLNT…TFVQ), and 211–232 (KLVR…GLFL). N-linked (GlcNAc...) asparagine glycosylation occurs at asparagine 87. Residues 252–298 (NPLHCNCELLWLRRLTREDDLETCATPEHLTDRYFWSIPEEEFLCEP) enclose the LRRCT domain. Residues 299–386 (PLITRQAGGR…GEATAPVEVC (88 aa)) enclose the Ig-like domain. A disulfide bridge connects residues cysteine 321 and cysteine 370. Asparagine 343 carries an N-linked (GlcNAc...) asparagine glycan. Positions 397-424 (PAAPPPLTEPGSSDIATPGRPGANDSTS) are disordered. The Fibronectin type-III domain occupies 424 to 520 (SERRLVAAEL…GCVQFTTAGD (97 aa)). A helical membrane pass occupies residues 537–557 (IIAIGGVIVASVLVFIVLLMI). The Cytoplasmic segment spans residues 558–766 (RYKVYGDGDS…STEWMLESTV (209 aa)). 2 disordered regions span residues 568 to 601 (RRIK…PPAP) and 645 to 742 (LCLL…GEDG). Phosphoserine is present on serine 713. Over residues 714 to 727 (YPRRARRTKRHRST) the composition is skewed to basic residues. A PDZ-binding motif is present at residues 763 to 766 (ESTV).

It belongs to the LRFN family. In terms of assembly, can form heteromeric complexes with LRFN2, LRFN3, LRFN4 and LRFN5. Forms homomeric complexes, but not across cell junctions. Interacts with DLG4. Also interacts with DLG1, DLG2, and DLG3. Interacts with 2 AMPA receptor subunits GRIA1 and GRIA2 and NMDA receptor subunit GRIN1. In terms of processing, glycosylated. Predominantly expressed in the brain, with a weak, but broad expression in the cerebral cortex and diencephalic nuclei. Also detected in other parts of the central nervous system, including the olfactory bulb, pons, cerebellum, and medulla oblongata, as well as in the peripheral nervous system, such as the ganglia of cranial nerves and the dorsal root ganglion during gestation.

The protein localises to the membrane. It localises to the synapse. The protein resides in the postsynaptic density membrane. Promotes neurite outgrowth in hippocampal neurons. Involved in the regulation and maintenance of excitatory synapses. Induces the clustering of excitatory postsynaptic proteins, including DLG4, DLGAP1, GRIA1 and GRIN1. The sequence is that of Leucine-rich repeat and fibronectin type III domain-containing protein 1 (Lrfn1) from Mus musculus (Mouse).